The sequence spans 170 residues: Crossover junction endodeoxyribonuclease RuvC (170 aa).

Active-site residues include Asp12, Glu72, and Asp144. 3 residues coordinate Mg(2+): Asp12, Glu72, and Asp144.

The protein belongs to the RuvC family. In terms of assembly, homodimer which binds Holliday junction (HJ) DNA. The HJ becomes 2-fold symmetrical on binding to RuvC with unstacked arms; it has a different conformation from HJ DNA in complex with RuvA. In the full resolvosome a probable DNA-RuvA(4)-RuvB(12)-RuvC(2) complex forms which resolves the HJ. The cofactor is Mg(2+).

The protein localises to the cytoplasm. It catalyses the reaction Endonucleolytic cleavage at a junction such as a reciprocal single-stranded crossover between two homologous DNA duplexes (Holliday junction).. The RuvA-RuvB-RuvC complex processes Holliday junction (HJ) DNA during genetic recombination and DNA repair. Endonuclease that resolves HJ intermediates. Cleaves cruciform DNA by making single-stranded nicks across the HJ at symmetrical positions within the homologous arms, yielding a 5'-phosphate and a 3'-hydroxyl group; requires a central core of homology in the junction. The consensus cleavage sequence is 5'-(A/T)TT(C/G)-3'. Cleavage occurs on the 3'-side of the TT dinucleotide at the point of strand exchange. HJ branch migration catalyzed by RuvA-RuvB allows RuvC to scan DNA until it finds its consensus sequence, where it cleaves and resolves the cruciform DNA. This is Crossover junction endodeoxyribonuclease RuvC from Nitrobacter hamburgensis (strain DSM 10229 / NCIMB 13809 / X14).